The following is a 297-amino-acid chain: tRNA dimethylallyltransferase (297 aa).

10–17 contributes to the ATP binding site; the sequence is GITASGKS. 12–17 is a substrate binding site; the sequence is TASGKS. The segment at 36–39 is interaction with substrate tRNA; the sequence is DSKQ.

The protein belongs to the IPP transferase family. In terms of assembly, monomer. Mg(2+) serves as cofactor.

The catalysed reaction is adenosine(37) in tRNA + dimethylallyl diphosphate = N(6)-dimethylallyladenosine(37) in tRNA + diphosphate. Catalyzes the transfer of a dimethylallyl group onto the adenine at position 37 in tRNAs that read codons beginning with uridine, leading to the formation of N6-(dimethylallyl)adenosine (i(6)A). The protein is tRNA dimethylallyltransferase of Wolbachia pipientis subsp. Culex pipiens (strain wPip).